A 227-amino-acid chain; its full sequence is Deoxyribose-phosphate aldolase (227 aa).

D84 serves as the catalytic Proton donor/acceptor. The Schiff-base intermediate with acetaldehyde role is filled by K146. The active-site Proton donor/acceptor is K188.

The protein belongs to the DeoC/FbaB aldolase family. DeoC type 1 subfamily.

Its subcellular location is the cytoplasm. It catalyses the reaction 2-deoxy-D-ribose 5-phosphate = D-glyceraldehyde 3-phosphate + acetaldehyde. The protein operates within carbohydrate degradation; 2-deoxy-D-ribose 1-phosphate degradation; D-glyceraldehyde 3-phosphate and acetaldehyde from 2-deoxy-alpha-D-ribose 1-phosphate: step 2/2. Catalyzes a reversible aldol reaction between acetaldehyde and D-glyceraldehyde 3-phosphate to generate 2-deoxy-D-ribose 5-phosphate. In Pyrobaculum islandicum (strain DSM 4184 / JCM 9189 / GEO3), this protein is Deoxyribose-phosphate aldolase.